Consider the following 327-residue polypeptide: Gibberellin 2-beta-dioxygenase 1 (327 aa).

The region spanning 171 to 276 is the Fe2OG dioxygenase domain; it reads QSDCLFRVNH…RLSMIYFCGP (106 aa). Positions 200, 202, and 257 each coordinate Fe cation. Residue R267 is part of the active site.

It belongs to the iron/ascorbate-dependent oxidoreductase family. GA2OX subfamily. It depends on Fe cation as a cofactor. Predominantly expressed in roots, flowers, young fruits and seeds.

It catalyses the reaction gibberellin A1 + 2-oxoglutarate + O2 = gibberellin A8 + succinate + CO2. It functions in the pathway plant hormone biosynthesis; gibberellin biosynthesis. Its function is as follows. Catalyzes the 2-beta-hydroxylation of several biologically active gibberellins, leading to the homeostatic regulation of their endogenous level. Catabolism of gibberellins (GAs) plays a central role in plant development. Converts GA9/GA20 to GA51/GA29 and GA4/GA1 to GA34/GA8. This chain is Gibberellin 2-beta-dioxygenase 1 (GA2OX1), found in Pisum sativum (Garden pea).